A 115-amino-acid polypeptide reads, in one-letter code: Large ribosomal subunit protein bL20 (115 aa).

It belongs to the bacterial ribosomal protein bL20 family.

Its function is as follows. Binds directly to 23S ribosomal RNA and is necessary for the in vitro assembly process of the 50S ribosomal subunit. It is not involved in the protein synthesizing functions of that subunit. In Microcystis aeruginosa (strain NIES-843 / IAM M-2473), this protein is Large ribosomal subunit protein bL20.